A 584-amino-acid chain; its full sequence is Actin-binding protein IPP (584 aa).

Residues 37-104 (CDVQLQVGQE…IYTGIVNIGV (68 aa)) form the BTB domain. Kelch repeat units lie at residues 289–343 (YLYA…VLGG), 344–390 (MVYA…VCYG), 391–437 (AIYA…EMQG), 439–485 (IYVI…ALND), 487–533 (IYSV…AVNG), and 535–583 (LYVS…GVAV).

It localises to the cytoplasm. Its subcellular location is the cytoskeleton. Functionally, may play a role in organizing the actin cytoskeleton. This chain is Actin-binding protein IPP (IPP), found in Homo sapiens (Human).